The sequence spans 295 residues: 4-hydroxy-tetrahydrodipicolinate synthase (295 aa).

Thr-47 is a pyruvate binding site. The Proton donor/acceptor role is filled by Tyr-135. The active-site Schiff-base intermediate with substrate is Lys-163. Residue Ile-206 participates in pyruvate binding.

The protein belongs to the DapA family. In terms of assembly, homodimer.

The protein resides in the cytoplasm. It catalyses the reaction L-aspartate 4-semialdehyde + pyruvate = (2S,4S)-4-hydroxy-2,3,4,5-tetrahydrodipicolinate + H2O + H(+). The protein operates within amino-acid biosynthesis; L-lysine biosynthesis via DAP pathway; (S)-tetrahydrodipicolinate from L-aspartate: step 3/4. Its activity is regulated as follows. Is not feedback inhibited by lysine. Functionally, catalyzes the condensation of (S)-aspartate-beta-semialdehyde [(S)-ASA] and pyruvate to 4-hydroxy-tetrahydrodipicolinate (HTPA). This is 4-hydroxy-tetrahydrodipicolinate synthase from Staphylococcus aureus (strain COL).